Reading from the N-terminus, the 239-residue chain is Small ribosomal subunit protein uS2 (239 aa).

The protein belongs to the universal ribosomal protein uS2 family.

The chain is Small ribosomal subunit protein uS2 from Synechococcus sp. (strain WH7803).